Consider the following 552-residue polypeptide: MAPIGVLTALDQARTQYYHFKAIVIAGMGLFTDSYDLFCIAPVMKIVGRVYYSDGGARPGVTPPAVVSATVGVALLGAVIGNVVFGALGDRVGRRRVYGACLLLMVCSSVGSGFSVCRTRRCALASLCFFRFLLGVGVGGDYPLSATIMSEFANRRTRGAFIAAVFSMQGFGILASSAVTMAVAAAFDHYTGYPAPLDTPECADLAWRIILMAGAVPAALTYYWRMSMPETARYTALVERDVVKATNDIGRVLADLDLGAVAEEEVAAALSRPPPPPRPSYGLLSRRFVRQHGRDLFACAAAWFLLDIPYYSSTLFQSQIYRPLFPAPGLINAFQEAFNVAKFQAVIAVASTIPGYFVAVLLIDRVGRRCLQMAGFLLMAVFLFALAGPYDGYWRDHGAHAGYIVLYSLTFFSANLGPNTTTFILPAELFPARFRSTCHGLSGAAGKLGALVGSIGFLWASQQKDGAAAGHLPGIGMMYALFVLGGICLLGLALTYVFTPETMMRSLEENESDRAQTQVGDGGSDTEAAKSPASMASSHLSMSPILPARVSV.

Residues 1–22 (MAPIGVLTALDQARTQYYHFKA) are Cytoplasmic-facing. Residues 23-43 (IVIAGMGLFTDSYDLFCIAPV) traverse the membrane as a helical segment. The Extracellular segment spans residues 44-68 (MKIVGRVYYSDGGARPGVTPPAVVS). Residues 69–89 (ATVGVALLGAVIGNVVFGALG) traverse the membrane as a helical segment. Residues 90-96 (DRVGRRR) lie on the Cytoplasmic side of the membrane. A helical transmembrane segment spans residues 97–117 (VYGACLLLMVCSSVGSGFSVC). Residues 118–123 (RTRRCA) are Extracellular-facing. The helical transmembrane segment at 124–144 (LASLCFFRFLLGVGVGGDYPL) threads the bilayer. The Cytoplasmic segment spans residues 145 to 158 (SATIMSEFANRRTR). A helical membrane pass occupies residues 159 to 179 (GAFIAAVFSMQGFGILASSAV). At 180 to 203 (TMAVAAAFDHYTGYPAPLDTPECA) the chain is on the extracellular side. Residues 204–224 (DLAWRIILMAGAVPAALTYYW) traverse the membrane as a helical segment. Residues 225–295 (RMSMPETARY…RRFVRQHGRD (71 aa)) lie on the Cytoplasmic side of the membrane. Residues 296-316 (LFACAAAWFLLDIPYYSSTLF) traverse the membrane as a helical segment. Over 317–342 (QSQIYRPLFPAPGLINAFQEAFNVAK) the chain is Extracellular. A helical transmembrane segment spans residues 343–363 (FQAVIAVASTIPGYFVAVLLI). Residues 364–369 (DRVGRR) lie on the Cytoplasmic side of the membrane. A helical transmembrane segment spans residues 370-390 (CLQMAGFLLMAVFLFALAGPY). The Extracellular portion of the chain corresponds to 391–397 (DGYWRDH). Residues 398-418 (GAHAGYIVLYSLTFFSANLGP) form a helical membrane-spanning segment. Topologically, residues 419–439 (NTTTFILPAELFPARFRSTCH) are cytoplasmic. A helical transmembrane segment spans residues 440-460 (GLSGAAGKLGALVGSIGFLWA). The Extracellular portion of the chain corresponds to 461-473 (SQQKDGAAAGHLP). Residues 474 to 494 (GIGMMYALFVLGGICLLGLAL) form a helical membrane-spanning segment. Residues 495-552 (TYVFTPETMMRSLEENESDRAQTQVGDGGSDTEAAKSPASMASSHLSMSPILPARVSV) are Cytoplasmic-facing. A disordered region spans residues 507–540 (LEENESDRAQTQVGDGGSDTEAAKSPASMASSHL).

It belongs to the major facilitator superfamily. Phosphate:H(+) symporter (TC 2.A.1.9) family. In terms of tissue distribution, expressed at low levels in roots.

The protein resides in the membrane. High-affinity transporter for external inorganic phosphate. This is Probable inorganic phosphate transporter 1-10 (PHT1-10) from Oryza sativa subsp. japonica (Rice).